A 120-amino-acid polypeptide reads, in one-letter code: Protein ORF-C (120 aa).

The protein resides in the host mitochondrion. Functionally, induces alteration of mitochondrial function that results in apoptosis contributing to tumor regression. This is Protein ORF-C (orfC) from Walleye dermal sarcoma virus (WDSV).